Here is a 296-residue protein sequence, read N- to C-terminus: ATP synthase gamma chain (296 aa).

This sequence belongs to the ATPase gamma chain family. In terms of assembly, F-type ATPases have 2 components, CF(1) - the catalytic core - and CF(0) - the membrane proton channel. CF(1) has five subunits: alpha(3), beta(3), gamma(1), delta(1), epsilon(1). CF(0) has three main subunits: a, b and c.

The protein resides in the cell inner membrane. Its function is as follows. Produces ATP from ADP in the presence of a proton gradient across the membrane. The gamma chain is believed to be important in regulating ATPase activity and the flow of protons through the CF(0) complex. This chain is ATP synthase gamma chain, found in Gluconobacter oxydans (strain 621H) (Gluconobacter suboxydans).